A 708-amino-acid polypeptide reads, in one-letter code: MATLYEEYTLCGVGPDKNSSSSGILGIELGKDVDHIIVTNSSRAVTVYKVSDQKPTGSWTVKQGQLITCPAVYNTKSQEYVVVTDNKVIRVWKEDDVNMEKAFKATVSSDVLRVIAASDSEPVVLFSCGAVMFLDSLLASPQQTIEGVLTEEEFIRWSTVVGAEHQLVLLFCTEKRGEHYLYAQRFNPNTVVKHRFETEPGPFAPISFSATCRGSNIHLQYLYMSGRIYESVLPLRSSVSEAEGVQALPRSLCLSLPLGEQELTSGAAIVLDEAHVAIVGFPHPSAGAGKDYLCIWNKHFQTLQACKELAGTIYSQIWCYSGKLYIPHGKILSVISFECQKSSLAAAMGKLKQTNQSESKSHTPLSSWTALPHNDSINAAKVKSRMSTRNASNVKSPLTVDQLIDHIKTAVVEDVQSAVGEFIHQTPQTDLQLAAGKVTMVLVSRSQTDDSFYPQRAFLQLLDTRYLCYSVCPELLSLAMAKRDFQLCQIAFQLFPDIPEAVTCAYLKTILSTPDSEMETLTLDTESLIIMKEMSPAQSQMEEGEQQNENGVSSSKQQRDFLSMDMKCPVGLHKGVLLNDVLQTAYSDKPLLQHLKDLTVLQVMVFLQYLHFLYLKYSQDVHKQIRALRIPSISQVIDWASLILDAHFTVLAVAPEAKSLVSDLHKFTRSQVKLYAELGKIEGSLQSLKKPKSTEHTGVYSIEVIELF.

The protein resides in the nucleus. It is found in the nucleolus. In terms of biological role, ribosome biogenesis factor. May be required for both optimal rDNA transcription and pre-rRNA processing. This Danio rerio (Zebrafish) protein is Nucleolar protein 11-like (nol11).